The sequence spans 467 residues: Proton extrusion protein PxcA (467 aa).

Residues 183–205 form a disordered region; that stretch reads TSPPQLIRPRTEQNKKPRGKADT. The span at 191–203 shows a compositional bias: basic and acidic residues; it reads PRTEQNKKPRGKA. 4 helical membrane passes run 249-269, 352-372, 391-411, and 427-447; these read FILL…ALIV, IFSV…IMVL, IIIL…WEVI, and FIFL…KYWI.

The protein belongs to the CemA family.

It localises to the cell inner membrane. In terms of biological role, required for H(+) efflux immediately after light irradiation to form a rapid H(+) concentration gradient across the thylakoid membranes. Together with PxcL, contributes to transient H(+) uptake following dark to light transition. This Trichormus variabilis (strain ATCC 29413 / PCC 7937) (Anabaena variabilis) protein is Proton extrusion protein PxcA.